The sequence spans 565 residues: Oxygen-dependent choline dehydrogenase (565 aa).

6-35 (DYIIVGAGSAGNTLATRLTEDAGVTVLLLE) provides a ligand contact to FAD. Positions 182–201 (QQEGFGPMDRTVTKNGRRSS) are disordered. Residue His475 is the Proton acceptor of the active site.

It belongs to the GMC oxidoreductase family. FAD is required as a cofactor.

The catalysed reaction is choline + A = betaine aldehyde + AH2. The enzyme catalyses betaine aldehyde + NAD(+) + H2O = glycine betaine + NADH + 2 H(+). Its pathway is amine and polyamine biosynthesis; betaine biosynthesis via choline pathway; betaine aldehyde from choline (cytochrome c reductase route): step 1/1. In terms of biological role, involved in the biosynthesis of the osmoprotectant glycine betaine. Catalyzes the oxidation of choline to betaine aldehyde and betaine aldehyde to glycine betaine at the same rate. In Pseudomonas putida (strain ATCC 47054 / DSM 6125 / CFBP 8728 / NCIMB 11950 / KT2440), this protein is Oxygen-dependent choline dehydrogenase.